The primary structure comprises 414 residues: 2-epi-5-epi-valiolone synthase (414 aa).

NAD(+) is bound by residues D70, 101–104 (ESAK), 134–138 (GVLTD), 158–159 (TT), K171, K180, and 198–201 (FLAT). K171 is a catalytic residue. Zn(2+)-binding residues include E213, H284, and H300.

This sequence belongs to the sugar phosphate cyclases superfamily. EEVS family. The cofactor is NAD(+). Zn(2+) serves as cofactor.

It carries out the reaction D-sedoheptulose 7-phosphate = 2-epi-5-epi-valiolone + phosphate. It functions in the pathway antibiotic biosynthesis. In terms of biological role, catalyzes the cyclization of D-sedoheptulose 7-phosphate to 2-epi-5-epi-valiolone. Involved in validamycin biosynthesis. In Streptomyces hygroscopicus subsp. jinggangensis (strain 5008), this protein is 2-epi-5-epi-valiolone synthase.